The chain runs to 184 residues: Luciferin-binding protein (184 aa).

4 EF-hand domains span residues 10 to 45 (YHLR…IAKI), 46 to 81 (AKLS…EEAA), 98 to 133 (MAVI…VGPD), and 134 to 169 (ITDD…FLFG). The Ca(2+) site is built by Asp111, Asp113, Asp115, Tyr117, Glu122, Asp147, Asn149, Asn151, Gln153, and Glu158.

In terms of biological role, this Ca(2+)-dependent protein binds to luciferin. The luciferin of LBP is capable of reacting with luciferase and O(2) only when calcium is bound. The protein is Luciferin-binding protein of Renilla reniformis (Sea pansy).